Reading from the N-terminus, the 335-residue chain is O(6)-methylguanine-induced apoptosis 2 (335 aa).

The segment covering 1 to 11 has biased composition (basic and acidic residues); sequence MDNSTQKDQHS. Residues 1–20 form a disordered region; the sequence is MDNSTQKDQHSGKKYSRKAN. STPGR repeat units lie at residues 68-75, 110-118, 149-156, 188-215, 226-255, 267-284, and 308-317; these read PGPGFYNV, PAANAYTIP, PAPNQYNA, GPAP…FKSK, GPGP…LNFS, LPGP…PRKH, and PGPATYRPEF. Tyrosine 73 is subject to Phosphotyrosine.

The protein belongs to the STPG1 family.

The protein localises to the cytoplasm. It localises to the nucleus. Functionally, may positively contribute to the induction of apoptosis triggered by O(6)-methylguanine. The chain is O(6)-methylguanine-induced apoptosis 2 (STPG1) from Bos taurus (Bovine).